A 366-amino-acid chain; its full sequence is S-adenosylmethionine decarboxylase proenzyme 1 (366 aa).

Catalysis depends on residues E9 and E12. Residue E68 participates in substrate binding. S69 serves as the catalytic Schiff-base intermediate with substrate; via pyruvic acid. Position 69 is a pyruvic acid (Ser); by autocatalysis (S69). C83 functions as the Proton donor; for catalytic activity in the catalytic mechanism. Residues S233 and H246 each act as proton acceptor; for processing activity in the active site. E250 lines the substrate pocket.

This sequence belongs to the eukaryotic AdoMetDC family. It depends on pyruvate as a cofactor. Post-translationally, is synthesized initially as an inactive proenzyme. Formation of the active enzyme involves a self-maturation process in which the active site pyruvoyl group is generated from an internal serine residue via an autocatalytic post-translational modification. Two non-identical subunits are generated from the proenzyme in this reaction, and the pyruvate is formed at the N-terminus of the alpha chain, which is derived from the carboxyl end of the proenzyme. The post-translation cleavage follows an unusual pathway, termed non-hydrolytic serinolysis, in which the side chain hydroxyl group of the serine supplies its oxygen atom to form the C-terminus of the beta chain, while the remainder of the serine residue undergoes an oxidative deamination to produce ammonia and the pyruvoyl group blocking the N-terminus of the alpha chain.

The catalysed reaction is S-adenosyl-L-methionine + H(+) = S-adenosyl 3-(methylsulfanyl)propylamine + CO2. It functions in the pathway amine and polyamine biosynthesis; S-adenosylmethioninamine biosynthesis; S-adenosylmethioninamine from S-adenosyl-L-methionine: step 1/1. Functionally, essential for biosynthesis of the polyamines spermidine and spermine. Essential for polyamine homeostasis, and normal plant embryogenesis, growth and development. The chain is S-adenosylmethionine decarboxylase proenzyme 1 from Arabidopsis thaliana (Mouse-ear cress).